Reading from the N-terminus, the 488-residue chain is Germacrene A hydroxylase (488 aa).

A helical; Signal-anchor for type II membrane protein transmembrane segment spans residues 7 to 23 (TSIALATILFFVYKFAT). Asn-169, Asn-260, Asn-379, and Asn-410 each carry an N-linked (GlcNAc...) asparagine glycan. Cys-432 serves as a coordination point for heme.

This sequence belongs to the cytochrome P450 family. As to expression, expressed in floral glandular trichomes.

It localises to the endoplasmic reticulum membrane. The enzyme catalyses (+)-(R)-germacrene A + 3 reduced [NADPH--hemoprotein reductase] + 3 O2 = germacra-1(10),4,11(13)-trien-12-oate + 3 oxidized [NADPH--hemoprotein reductase] + 4 H2O + 4 H(+). It functions in the pathway secondary metabolite biosynthesis; terpenoid biosynthesis. Its function is as follows. Involved in the biosynthesis of germacrene-derived sesquiterpene lactones. Component of the parthenolide biosynthetic pathway; parthenolide and conjugates are promising anti-cancer drugs highly active against colon cancer cells. Catalyzes three consecutive oxidations of germacrene A to produce germacrene A acid. The sequence is that of Germacrene A hydroxylase from Tanacetum parthenium (Feverfew).